A 1077-amino-acid chain; its full sequence is Adenylate cyclase type 4 (1077 aa).

The Cytoplasmic portion of the chain corresponds to 1 to 28 (MARLFSPRPPPSEDLFYETYYSLSQQYP). Transmembrane regions (helical) follow at residues 29-50 (LLIL…VAWA), 61-80 (FLTT…GLAS), 94-117 (GLIW…VSAW), 120-138 (VSFF…PLGM), 141-162 (AAAA…YLGW), and 170-190 (LLPQ…VGAY). The Cytoplasmic segment spans residues 191–582 (HKALMERALR…YRLSALPAFK (392 aa)). Mg(2+) contacts are provided by Asp-278, Ile-279, and Asp-322. Residues 278 to 283 (DIVGFT), 320 to 322 (LGD), and Arg-366 contribute to the ATP site. A disordered region spans residues 503–524 (TSTPLPEKAFSPQWSLDRSRTP). Ser-517 carries the phosphoserine modification. Residue Thr-533 is modified to Phosphothreonine. The next 3 membrane-spanning stretches (helical) occupy residues 583–604 (YYAA…LVTT), 608–630 (ALII…CFSE), and 661–684 (VALG…FLPV). Over 685-717 (SSDCLFLASNVSSVTFNASWEMPGSLPLISIPL) the chain is Extracellular. Asn-694 and Asn-701 each carry an N-linked (GlcNAc...) asparagine glycan. Helical transmembrane passes span 718–738 (ISIP…SLFL), 746–766 (LLLL…SHAW), and 793–809 (MGAI…LVLA). Topologically, residues 810–1077 (RQNEYYCRLD…LTRTGSPSAS (268 aa)) are cytoplasmic. ATP contacts are provided by residues Lys-927, 1007 to 1009 (DIW), 1014 to 1018 (NVASR), and Lys-1054.

It belongs to the adenylyl cyclase class-4/guanylyl cyclase family. It depends on Mg(2+) as a cofactor. Requires Mn(2+) as cofactor.

The protein resides in the cell membrane. It is found in the cytoplasm. The enzyme catalyses ATP = 3',5'-cyclic AMP + diphosphate. Activated by forskolin. Insensitive to calcium/calmodulin. Stimulated by GNAS and by the G-protein beta and gamma subunit complex. Functionally, catalyzes the formation of the signaling molecule cAMP in response to G-protein signaling. The chain is Adenylate cyclase type 4 (Adcy4) from Mus musculus (Mouse).